A 541-amino-acid chain; its full sequence is Pseudokinase FAM20A (541 aa).

A signal peptide spans 1-33; it reads MPGLRRDRLLTLLLLGALLSADLYFHLWPQVQR. The disordered stretch occupies residues 38 to 90; sequence RERPRGCPCTGRASSLARDSAAAASDPGTIVHNFSRTEPRTEPAGGSHSGSSS. Low complexity predominate over residues 49-63; that stretch reads RASSLARDSAAAASD. N-linked (GlcNAc...) asparagine glycans are attached at residues Asn70, Asn145, and Asn287. Disulfide bonds link Cys314/Cys330, Cys319/Cys323, Cys378/Cys452, and Cys453/Cys512. Residue Asn388 is glycosylated (N-linked (GlcNAc...) asparagine). Residue Asn538 is glycosylated (N-linked (GlcNAc...) asparagine).

This sequence belongs to the FAM20 family. As to quaternary structure, interacts with FAM20C; probably forming a heterotetramer of 2 subunits of FAM20A and 2 subunits of FAM20C. Post-translationally, N-glycosylated. As to expression, highly expressed in lung and liver. Intermediate levels in thymus and ovary.

The protein localises to the secreted. It is found in the golgi apparatus. The protein resides in the endoplasmic reticulum. Its function is as follows. Pseudokinase that acts as an allosteric activator of the Golgi serine/threonine protein kinase FAM20C and is involved in biomineralization of teeth. Forms a complex with FAM20C and increases the ability of FAM20C to phosphorylate the proteins that form the 'matrix' that guides the deposition of the enamel minerals. This Homo sapiens (Human) protein is Pseudokinase FAM20A.